We begin with the raw amino-acid sequence, 1021 residues long: SWI/SNF-related matrix-associated actin-dependent regulator of chromatin subfamily A containing DEAD/H box 1 (1021 aa).

Position 1 is an N-acetylmethionine (methionine 1). 2 disordered regions span residues 1-82 (MNLF…SLSC) and 124-151 (SEPS…EDLS). Positions 7 to 19 (DRFRFEKRSKIEE) are enriched in basic and acidic residues. Positions 22–39 (EAAPQPSQARPSSPISLS) are enriched in low complexity. A Phosphothreonine modification is found at threonine 54. Residue serine 57 is modified to Phosphoserine. Lysine 77 is covalently cross-linked (Glycyl lysine isopeptide (Lys-Gly) (interchain with G-Cter in SUMO2)). Residues serine 79, serine 124, serine 127, serine 132, serine 144, serine 145, and serine 151 each carry the phosphoserine modification. The CUE 1 domain occupies 156-198 (LKDAKLQTLKELFPQRSDSDLLKLIESTSTMDGAIAAALLMFG). Residues 201–246 (GGGPRKRKLSSSSEEDDVNDDQSVKQPRGDRGEESNESAEASSNWE) are disordered. A phosphoserine mark is found at serine 210, serine 213, serine 235, and serine 238. In terms of domain architecture, CUE 2 spans 247–290 (KQESIVLKLQKEFPNFDKQELREVLKEHEWMYTEALESLKVFAE). A Phosphoserine modification is found at serine 298. The segment at 329–366 (VKPQNGFNKKRKKNVFNPKKAVEDSEYDSGSDAGSSLD) is disordered. Residues lysine 330 and lysine 466 each participate in a glycyl lysine isopeptide (Lys-Gly) (interchain with G-Cter in SUMO2) cross-link. Positions 504 to 672 (ALVHKHGLNG…MSLLNFVMPH (169 aa)) constitute a Helicase ATP-binding domain. 516–524 (ADEMGLGKT) provides a ligand contact to ATP. Residues 623 to 626 (DEGH) carry the DEGH box motif. A Nuclear localization signal motif is present at residues 716–733 (RRVKEEVLKLLPPKKDRI). Residue lysine 719 forms a Glycyl lysine isopeptide (Lys-Gly) (interchain with G-Cter in SUMO2) linkage. Residues 853–1005 (ALGCILSELK…MTTVDEADEG (153 aa)) form the Helicase C-terminal domain. 892 to 899 (YLRLDGKT) lines the ATP pocket. A Glycyl lysine isopeptide (Lys-Gly) (interchain with G-Cter in SUMO2) cross-link involves residue lysine 991. The short motif at 1000–1003 (DEAD) is the DEAD box element.

It belongs to the SNF2/RAD54 helicase family. As to quaternary structure, binds to DNA preferentially in the vicinity of transcriptional start sites. Interacts with MSH2 and TRIM28. Part of a complex composed of TRIM28, HDAC1, HDAC2 and EHMT2. Interacts with PCNA.

The protein resides in the nucleus. The protein localises to the chromosome. The catalysed reaction is ATP + H2O = ADP + phosphate + H(+). In terms of biological role, DNA helicase that possesses intrinsic ATP-dependent nucleosome-remodeling activity and is both required for DNA repair and heterochromatin organization. Promotes DNA end resection of double-strand breaks (DSBs) following DNA damage: probably acts by weakening histone DNA interactions in nucleosomes flanking DSBs. Required for the restoration of heterochromatin organization after replication. Acts at replication sites to facilitate the maintenance of heterochromatin by directing H3 and H4 histones deacetylation, H3 'Lys-9' trimethylation (H3K9me3) and restoration of silencing. This chain is SWI/SNF-related matrix-associated actin-dependent regulator of chromatin subfamily A containing DEAD/H box 1 (Smarcad1), found in Mus musculus (Mouse).